A 116-amino-acid polypeptide reads, in one-letter code: Large ribosomal subunit protein bL19 (116 aa).

Belongs to the bacterial ribosomal protein bL19 family.

In terms of biological role, this protein is located at the 30S-50S ribosomal subunit interface and may play a role in the structure and function of the aminoacyl-tRNA binding site. The protein is Large ribosomal subunit protein bL19 of Shewanella loihica (strain ATCC BAA-1088 / PV-4).